Reading from the N-terminus, the 68-residue chain is Large ribosomal subunit protein bL32 (68 aa).

Residues 1–25 (MAVPQNKITKSRRGQRRSHDALVAG) form a disordered region.

It belongs to the bacterial ribosomal protein bL32 family.

In Dinoroseobacter shibae (strain DSM 16493 / NCIMB 14021 / DFL 12), this protein is Large ribosomal subunit protein bL32.